Reading from the N-terminus, the 484-residue chain is Putative myrosinase 6 (484 aa).

An N-linked (GlcNAc...) asparagine glycan is attached at N28. A beta-D-glucoside-binding positions include Q39, H140, and N184–Q185. C204 and C207 are joined by a disulfide. N260 carries an N-linked (GlcNAc...) asparagine glycan. A beta-D-glucoside-binding positions include Y321, W440, E447–F448, and F456. N-linked (GlcNAc...) asparagine glycosylation occurs at N462.

The protein belongs to the glycosyl hydrolase 1 family.

It carries out the reaction a thioglucoside + H2O = a sugar + a thiol.. The polypeptide is Putative myrosinase 6 (Arabidopsis thaliana (Mouse-ear cress)).